The sequence spans 310 residues: tRNA dimethylallyltransferase (310 aa).

14 to 21 contributes to the ATP binding site; the sequence is GPTASGKS. Residue 16 to 21 coordinates substrate; it reads TASGKS. Interaction with substrate tRNA stretches follow at residues 39 to 42 and 163 to 167; these read DSMQ and QRIVR.

The protein belongs to the IPP transferase family. Monomer. It depends on Mg(2+) as a cofactor.

It carries out the reaction adenosine(37) in tRNA + dimethylallyl diphosphate = N(6)-dimethylallyladenosine(37) in tRNA + diphosphate. Catalyzes the transfer of a dimethylallyl group onto the adenine at position 37 in tRNAs that read codons beginning with uridine, leading to the formation of N6-(dimethylallyl)adenosine (i(6)A). The chain is tRNA dimethylallyltransferase from Brucella suis biovar 1 (strain 1330).